The chain runs to 469 residues: Ribulose bisphosphate carboxylase large chain (469 aa).

K8 is subject to N6,N6,N6-trimethyllysine. N117 and T167 together coordinate substrate. K169 serves as the catalytic Proton acceptor. Position 171 (K171) interacts with substrate. Residues K195, D197, and E198 each contribute to the Mg(2+) site. Position 195 is an N6-carboxylysine (K195). Residue H288 is the Proton acceptor of the active site. Substrate is bound by residues R289, H321, and S373.

The protein belongs to the RuBisCO large chain family. Type I subfamily. As to quaternary structure, heterohexadecamer of 8 large chains and 8 small chains; disulfide-linked. The disulfide link is formed within the large subunit homodimers. It depends on Mg(2+) as a cofactor. Post-translationally, the disulfide bond which can form in the large chain dimeric partners within the hexadecamer appears to be associated with oxidative stress and protein turnover.

The protein localises to the plastid. It localises to the chloroplast. It catalyses the reaction 2 (2R)-3-phosphoglycerate + 2 H(+) = D-ribulose 1,5-bisphosphate + CO2 + H2O. It carries out the reaction D-ribulose 1,5-bisphosphate + O2 = 2-phosphoglycolate + (2R)-3-phosphoglycerate + 2 H(+). RuBisCO catalyzes two reactions: the carboxylation of D-ribulose 1,5-bisphosphate, the primary event in carbon dioxide fixation, as well as the oxidative fragmentation of the pentose substrate in the photorespiration process. Both reactions occur simultaneously and in competition at the same active site. The sequence is that of Ribulose bisphosphate carboxylase large chain from Persicaria senticosa (Knotweed).